The sequence spans 627 residues: Sodium- and chloride-dependent GABA transporter 3 (627 aa).

Residues 1 to 36 (MTAEQALPLGNGKAAEEARGSEALGGGGGGAAGTRE) are disordered. The Cytoplasmic portion of the chain corresponds to 1-53 (MTAEQALPLGNGKAAEEARGSEALGGGGGGAAGTREARDKAVHERGHWNNKVE). At Ser21 the chain carries Phosphoserine. Positions 23–32 (ALGGGGGGAA) are enriched in gly residues. The next 3 helical transmembrane spans lie at 54 to 74 (FVLSVAGEIIGLGNVWRFPYL), 82 to 101 (AFLIPYVVFFICCGIPVFFL), and 126 to 146 (GIGYATQVIEAHLNVYYIIIL). Over 147-220 (AWAIFYLSNC…DGIEHIGNLR (74 aa)) the chain is Extracellular. Asn182, Asn185, and Asn193 each carry an N-linked (GlcNAc...) asparagine glycan. 9 helical membrane-spanning segments follow: residues 221 to 239 (WELALCLLAAWTICYFCIW), 248 to 265 (VVYVTATFPYIMLLILLI), 301 to 318 (IFFSYAICLGCLTALGSY), 330 to 351 (IMLCCLNSGTSFVAGFAIFSVL), 384 to 403 (MPLSPLWATLFFMMLIFLGL), 433 to 451 (LLILALSIVSYFLGLVMLT), 468 to 488 (GMCLLFVAIFECVCIGWVYGS), 509 to 528 (WCWKVVTPGICAGIFIFFLV), and 548 to 566 (IGWLMALSSMLCIPLWIFI). Residues 567–627 (KLWKTEGTLP…SAITEKETHF (61 aa)) are Cytoplasmic-facing.

This sequence belongs to the sodium:neurotransmitter symporter (SNF) (TC 2.A.22) family. SLC6A11 subfamily. Brain and retina. Expressed predominantly within neurons. Expressed in the hippocampus (at protein level).

Its subcellular location is the cell membrane. The catalysed reaction is 4-aminobutanoate(out) + chloride(out) + 2 Na(+)(out) = 4-aminobutanoate(in) + chloride(in) + 2 Na(+)(in). The enzyme catalyses taurine(out) + chloride(out) + 2 Na(+)(out) = taurine(in) + chloride(in) + 2 Na(+)(in). It catalyses the reaction beta-alanine(out) + chloride(out) + 2 Na(+)(out) = beta-alanine(in) + chloride(in) + 2 Na(+)(in). It carries out the reaction hypotaurine(out) + chloride(out) + 2 Na(+)(out) = hypotaurine(in) + chloride(in) + 2 Na(+)(in). GABA transport is inhibited by beta-alanine. Mediates sodium- and chloride-dependent transport of gamma-aminobutyric acid (GABA). Can also mediate transport of beta-alanine and to a lower extent that of taurine and hypotaurine. In Rattus norvegicus (Rat), this protein is Sodium- and chloride-dependent GABA transporter 3 (Slc6a11).